We begin with the raw amino-acid sequence, 230 residues long: Ion-translocating oxidoreductase complex subunit E (230 aa).

5 helical membrane-spanning segments follow: residues 39-59 (LGLGIATLLVLVGSNVTVSLV), 69-89 (IPVFVMIIASLVTCVQLLMNA), 93-113 (GLYLSLGIFIPLIVTNCIIIG), 124-144 (VLPAALDGFWMGLGMTSVLVV), and 182-202 (AFLLALLPPGAFIGVGFLIAA).

Belongs to the NqrDE/RnfAE family. The complex is composed of six subunits: RnfA, RnfB, RnfC, RnfD, RnfE and RnfG.

The protein localises to the cell inner membrane. Functionally, part of a membrane-bound complex that couples electron transfer with translocation of ions across the membrane. The polypeptide is Ion-translocating oxidoreductase complex subunit E (Vibrio cholerae serotype O1 (strain ATCC 39315 / El Tor Inaba N16961)).